The primary structure comprises 132 residues: Fluoride-specific ion channel FluC 2 (132 aa).

4 helical membrane-spanning segments follow: residues 12–32, 41–61, 65–85, and 96–116; these read LTEL…RWQL, LLVN…PVAP, LLVG…MLAA, and AALG…ALGF. Na(+) is bound by residues glycine 73 and threonine 76.

It belongs to the fluoride channel Fluc/FEX (TC 1.A.43) family.

It localises to the cell inner membrane. The catalysed reaction is fluoride(in) = fluoride(out). With respect to regulation, na(+) is not transported, but it plays an essential structural role and its presence is essential for fluoride channel function. In terms of biological role, fluoride-specific ion channel. Important for reducing fluoride concentration in the cell, thus reducing its toxicity. In Parasynechococcus marenigrum (strain WH8102), this protein is Fluoride-specific ion channel FluC 2.